Reading from the N-terminus, the 243-residue chain is 23S rRNA (guanosine-2'-O-)-methyltransferase RlmB (243 aa).

3 residues coordinate S-adenosyl-L-methionine: glycine 196, isoleucine 216, and leucine 225.

Belongs to the class IV-like SAM-binding methyltransferase superfamily. RNA methyltransferase TrmH family. RlmB subfamily. In terms of assembly, homodimer.

Its subcellular location is the cytoplasm. It carries out the reaction guanosine(2251) in 23S rRNA + S-adenosyl-L-methionine = 2'-O-methylguanosine(2251) in 23S rRNA + S-adenosyl-L-homocysteine + H(+). Functionally, specifically methylates the ribose of guanosine 2251 in 23S rRNA. In Salmonella typhimurium (strain LT2 / SGSC1412 / ATCC 700720), this protein is 23S rRNA (guanosine-2'-O-)-methyltransferase RlmB.